Consider the following 321-residue polypeptide: Serine protease 52 (321 aa).

A signal peptide spans 1-27; the sequence is MKRWKDRRTGLLLPLVLLLFGACSSLA. Residues 56-287 enclose the Peptidase S1 domain; that stretch reads IVGGKPANIL…YVRWISKQTA (232 aa). Cys81 and Cys97 form a disulfide bridge. Residues His96 and Asp142 each act as charge relay system in the active site. Asn153 carries an N-linked (GlcNAc...) asparagine glycan. Disulfide bonds link Cys175–Cys242, Cys208–Cys221, and Cys232–Cys263. Ser236 (charge relay system) is an active-site residue. A helical membrane pass occupies residues 300–320; the sequence is ACPLVLSCRAILFLYFVMFLL.

It belongs to the peptidase S1 family.

Its subcellular location is the membrane. Probable serine protease. The chain is Serine protease 52 (Prss52) from Mus musculus (Mouse).